Here is a 354-residue protein sequence, read N- to C-terminus: Trans-enoyl reductase pydC (354 aa).

The region spanning 16–342 is the Enoyl reductase (ER) domain; it reads ANTDPVTFEI…RREVSGEKIV (327 aa). NADP(+) is bound by residues 51–54, 180–183, Tyr-198, 245–246, and 336–337; these read CDYK, SPKN, FE, and VS.

The protein belongs to the zinc-containing alcohol dehydrogenase family. In terms of assembly, monomer.

The protein operates within mycotoxin biosynthesis. Its function is as follows. Trans-enoyl reductase; part of the gene cluster that mediates the biosynthesis of pyrrocidines, fungal natural products containing a macrocyclic para-cyclophane connected to a decahydrofluorene ring system that show potent antibiotic activities toward Gram-negative bacteria. Within the pathway, the PKS-NRPS pydA, with the help of the trans-enoyl reductase pydC, synthesize the polyketide-tyrosyl acyl thioester product which can be reductively off-loaded by the terminal reductase (R) domain in pydA. The PKS module of pydA acts in combination with the trans-acting enoyl reductase pydC to produce a methylated polyketide attached to the ACP domain. In parallel, the adenylation (A) domain of the NRPS module activated L-tyrosine, which is then transferred to the ACP domain. The condensation (C) domain subsequently link this group to the polyketide chain, forming an enzyme-bound amide. The alpha/beta hydrolase pydG is then required to catalyze the subsequent Knoevenagel condensation that affords the 3-pyrrolin-2-one ring, whereas the four proteins pydB, pydE, pydX and pydZ then function synergistically to form the cyclophane. PydB and the membrane-bound pydX and pydZ are lipid-binding proteins that can sequester and mold the pdyG product into the inverse S-shape. Binding of the medium chain reductase pydE to the complex would trigger the cascade oxidative cyclization. PydY is involved in the Diels-Alder cycloaddition that forms the decahydrofluorene core. Additional non-enzymatic hydroxylation yields pyrrocidine A2 which can be further reduced into pyrrocidine B by an endogenous reductase. The chain is Trans-enoyl reductase pydC from Acremonium sp.